The primary structure comprises 50 residues: Photosystem II reaction center protein K (50 aa).

Residues 1–13 (MLNLNFTNITVMG) constitute a propeptide that is removed on maturation. A helical membrane pass occupies residues 25–45 (IVDILPIIPILFFLLAFVWQA).

Belongs to the PsbK family. In terms of assembly, PSII is composed of 1 copy each of membrane proteins PsbA, PsbB, PsbC, PsbD, PsbE, PsbF, PsbH, PsbI, PsbJ, PsbK, PsbL, PsbM, PsbT, PsbY, PsbZ, Psb30/Ycf12, at least 3 peripheral proteins of the oxygen-evolving complex and a large number of cofactors. It forms dimeric complexes.

Its subcellular location is the plastid. The protein localises to the chloroplast thylakoid membrane. In terms of biological role, one of the components of the core complex of photosystem II (PSII). PSII is a light-driven water:plastoquinone oxidoreductase that uses light energy to abstract electrons from H(2)O, generating O(2) and a proton gradient subsequently used for ATP formation. It consists of a core antenna complex that captures photons, and an electron transfer chain that converts photonic excitation into a charge separation. The polypeptide is Photosystem II reaction center protein K (Euglena myxocylindracea).